Consider the following 397-residue polypeptide: S-adenosylmethionine synthase (397 aa).

H16 provides a ligand contact to ATP. A Mg(2+)-binding site is contributed by D18. E44 contacts K(+). Residues E57 and Q100 each contribute to the L-methionine site. The flexible loop stretch occupies residues 100-110; the sequence is QSPDIAQGVDN. ATP-binding positions include 175-177, 242-243, D251, 257-258, A274, and K278; these read DGK, RF, and RK. An L-methionine-binding site is contributed by D251. K282 lines the L-methionine pocket.

This sequence belongs to the AdoMet synthase family. In terms of assembly, homotetramer; dimer of dimers. Mg(2+) serves as cofactor. The cofactor is K(+).

It localises to the cytoplasm. The enzyme catalyses L-methionine + ATP + H2O = S-adenosyl-L-methionine + phosphate + diphosphate. The protein operates within amino-acid biosynthesis; S-adenosyl-L-methionine biosynthesis; S-adenosyl-L-methionine from L-methionine: step 1/1. Functionally, catalyzes the formation of S-adenosylmethionine (AdoMet) from methionine and ATP. The overall synthetic reaction is composed of two sequential steps, AdoMet formation and the subsequent tripolyphosphate hydrolysis which occurs prior to release of AdoMet from the enzyme. The polypeptide is S-adenosylmethionine synthase (Leifsonia xyli subsp. xyli (strain CTCB07)).